Reading from the N-terminus, the 302-residue chain is Ornithine carbamoyltransferase (302 aa).

Residues 53–56 (STRT), glutamine 80, arginine 104, and 131–134 (HPCQ) each bind carbamoyl phosphate. L-ornithine contacts are provided by residues asparagine 162, aspartate 219, and 223 to 224 (SM). Residues 259 to 260 (CL) and arginine 287 contribute to the carbamoyl phosphate site.

This sequence belongs to the aspartate/ornithine carbamoyltransferase superfamily. OTCase family.

It localises to the cytoplasm. The enzyme catalyses carbamoyl phosphate + L-ornithine = L-citrulline + phosphate + H(+). It participates in amino-acid biosynthesis; L-arginine biosynthesis; L-arginine from L-ornithine and carbamoyl phosphate: step 1/3. Reversibly catalyzes the transfer of the carbamoyl group from carbamoyl phosphate (CP) to the N(epsilon) atom of ornithine (ORN) to produce L-citrulline. The polypeptide is Ornithine carbamoyltransferase (Hydrogenovibrio crunogenus (strain DSM 25203 / XCL-2) (Thiomicrospira crunogena)).